Consider the following 350-residue polypeptide: UDP-3-O-acylglucosamine N-acyltransferase (350 aa).

H248 functions as the Proton acceptor in the catalytic mechanism.

Belongs to the transferase hexapeptide repeat family. LpxD subfamily. In terms of assembly, homotrimer.

It carries out the reaction a UDP-3-O-[(3R)-3-hydroxyacyl]-alpha-D-glucosamine + a (3R)-hydroxyacyl-[ACP] = a UDP-2-N,3-O-bis[(3R)-3-hydroxyacyl]-alpha-D-glucosamine + holo-[ACP] + H(+). It participates in bacterial outer membrane biogenesis; LPS lipid A biosynthesis. Catalyzes the N-acylation of UDP-3-O-acylglucosamine using 3-hydroxyacyl-ACP as the acyl donor. Is involved in the biosynthesis of lipid A, a phosphorylated glycolipid that anchors the lipopolysaccharide to the outer membrane of the cell. This Nostoc punctiforme (strain ATCC 29133 / PCC 73102) protein is UDP-3-O-acylglucosamine N-acyltransferase.